Here is a 609-residue protein sequence, read N- to C-terminus: Cationic amino acid transporter 3, mitochondrial (609 aa).

The transit peptide at 1–14 (MGCLRSLVRRKQFD) directs the protein to the mitochondrion. Transmembrane regions (helical) follow at residues 38 to 58 (LIAI…VGTV), 66 to 86 (ALAL…FCYA), 104 to 124 (ICIG…EYTI), 161 to 181 (IVVD…CCLG), 190 to 210 (GIVT…GSYL), 226 to 246 (FPYG…AYIG), 270 to 290 (ISLL…VGLV), 314 to 334 (AYLI…GSIL), 361 to 381 (QVPI…AFFM), 388 to 408 (GMVS…LLIV), 474 to 494 (IMFT…FLLP), 499 to 519 (YSLC…LICI), 534 to 554 (FICP…MYLL), and 558 to 578 (GAAT…VYIF).

The protein belongs to the amino acid-polyamine-organocation (APC) superfamily. Cationic amino acid transporter (CAT) (TC 2.A.3.3) family. Expressed in roots, stems, flowers, and leaves.

It localises to the mitochondrion membrane. Functionally, permease involved in the transport of the cationic neutral or acidic amino acids. This is Cationic amino acid transporter 3, mitochondrial (CAT3) from Arabidopsis thaliana (Mouse-ear cress).